An 886-amino-acid polypeptide reads, in one-letter code: Desmocollin-1 (886 aa).

The first 29 residues, 1–29, serve as a signal peptide directing secretion; sequence MAVACAAPGSTFSKQLLFFLLVLVLFCDA. A propeptide spanning residues 30-134 is cleaved from the precursor; it reads CQKVSLHVPS…KEPVHNRSKR (105 aa). 2 N-linked (GlcNAc...) asparagine glycosylation sites follow: asparagine 130 and asparagine 165. 5 consecutive Cadherin domains span residues 135 to 242, 243 to 354, 355 to 471, 472 to 575, and 576 to 682; these read RWAP…APYF, ETKL…SPYF, TQTS…GPEC, QPPV…DHPP, and QIDK…EERD. The Extracellular portion of the chain corresponds to 135–691; that stretch reads RWAPIPCSLM…DAKPNIILGK (557 aa). Threonine 385 carries the post-translational modification Phosphothreonine. Asparagine 546 carries N-linked (GlcNAc...) (high mannose) asparagine glycosylation. Residue asparagine 613 is glycosylated (N-linked (GlcNAc...) asparagine). Residues 692–714 form a helical membrane-spanning segment; it reads WAILAMVLGSALLLCILFTCFCV. At 715 to 886 the chain is on the cytoplasmic side; it reads TTTKRTVKKC…RTLAKTCVKK (172 aa).

In terms of assembly, binds to JUP/plakoglobin. As to expression, expressed in the epidermis and inner root sheaths of hair follicles (at protein level).

It is found in the cell membrane. It localises to the cell junction. Its subcellular location is the desmosome. In terms of biological role, a component of desmosome cell-cell junctions which are required for positive regulation of cellular adhesion. Required for desmosome adhesion strength between the granular layers of the epidermis, as a result moderates epidermal proliferation and differentiation. Is therefore required to maintain postnatal epidermal barrier function and normal hair follicle morphology into adulthood. The sequence is that of Desmocollin-1 (Dsc1) from Mus musculus (Mouse).